The sequence spans 815 residues: Cilia- and flagella-associated protein 251 (815 aa).

10 WD repeats span residues 58–99, 103–148, 166–205, 218–257, 271–308, 379–418, 420–460, 463–502, 511–553, and 573–612; these read GHTS…PTRT, PHRH…TPPE, PAGD…PRFQ, QSVG…AQVG, IHNC…VAWF, SLLA…LLGG, AFER…DLYV, NTAA…HTMR, SHHG…VAAG, and SFAP…LERS.

In terms of assembly, identified in a spoke-associated complex containing CFAP61, CFAP91 and CFAP251; the complex is associated with the radial spokes in the axoneme. The complex associates with Calmodulin; the association is calcium sensitive.

The protein resides in the cytoplasm. The protein localises to the cytoskeleton. Its subcellular location is the flagellum axoneme. Functionally, as component of a spoke-associated complex, regulates flagellar dynein activity by mediating regulatory signals between the radial spokes and dynein arms. This is Cilia- and flagella-associated protein 251 from Chlamydomonas reinhardtii (Chlamydomonas smithii).